The chain runs to 267 residues: Outer membrane protein assembly factor BamD (267 aa).

An N-terminal signal peptide occupies residues 1–16 (MKKILLTVSLGLALSA). C17 carries the N-palmitoyl cysteine lipid modification. Residue C17 is the site of S-diacylglycerol cysteine attachment.

Belongs to the BamD family. In terms of assembly, part of the Bam complex.

It is found in the cell outer membrane. Its function is as follows. Part of the outer membrane protein assembly complex, which is involved in assembly and insertion of beta-barrel proteins into the outer membrane. Required for efficient transformation of Neisseria gonorrhoeae by species-related DNA. This Neisseria gonorrhoeae protein is Outer membrane protein assembly factor BamD.